The following is a 332-amino-acid chain: Cell growth regulator with RING finger domain protein 1 (332 aa).

The RING-type zinc-finger motif lies at 274 to 309 (CVVCQNGTVNWVLLPCRHTCLCDGCVKYFQQCPMCR).

In terms of tissue distribution, ubiquitously expressed with high expression in testis and the cerebellum.

The protein localises to the nucleus. Its subcellular location is the endoplasmic reticulum. Able to inhibit growth in several cell lines. This chain is Cell growth regulator with RING finger domain protein 1 (CGRRF1), found in Homo sapiens (Human).